Reading from the N-terminus, the 142-residue chain is Large ribosomal subunit protein uL11 (142 aa).

The protein belongs to the universal ribosomal protein uL11 family. Part of the ribosomal stalk of the 50S ribosomal subunit. Interacts with L10 and the large rRNA to form the base of the stalk. L10 forms an elongated spine to which L12 dimers bind in a sequential fashion forming a multimeric L10(L12)X complex. In terms of processing, one or more lysine residues are methylated.

Functionally, forms part of the ribosomal stalk which helps the ribosome interact with GTP-bound translation factors. The protein is Large ribosomal subunit protein uL11 of Rhodopseudomonas palustris (strain BisB18).